The following is a 194-amino-acid chain: dTTP/UTP pyrophosphatase (194 aa).

Residue Asp73 is the Proton acceptor of the active site.

Belongs to the Maf family. YhdE subfamily. Requires a divalent metal cation as cofactor.

The protein resides in the cytoplasm. It carries out the reaction dTTP + H2O = dTMP + diphosphate + H(+). The enzyme catalyses UTP + H2O = UMP + diphosphate + H(+). Nucleoside triphosphate pyrophosphatase that hydrolyzes dTTP and UTP. May have a dual role in cell division arrest and in preventing the incorporation of modified nucleotides into cellular nucleic acids. The protein is dTTP/UTP pyrophosphatase of Clostridium botulinum (strain 657 / Type Ba4).